A 101-amino-acid chain; its full sequence is Small ribosomal subunit protein bS18c (101 aa).

The segment covering 1–19 has biased composition (basic residues); it reads MDKSKQPFHKTKRSFRRRL. Residues 1 to 23 form a disordered region; sequence MDKSKQPFHKTKRSFRRRLPPIG.

It belongs to the bacterial ribosomal protein bS18 family. As to quaternary structure, part of the 30S ribosomal subunit.

It localises to the plastid. It is found in the chloroplast. This chain is Small ribosomal subunit protein bS18c, found in Lemna minor (Common duckweed).